Here is a 179-residue protein sequence, read N- to C-terminus: Large ribosomal subunit protein uL5 (179 aa).

This sequence belongs to the universal ribosomal protein uL5 family. As to quaternary structure, part of the 50S ribosomal subunit; part of the 5S rRNA/L5/L18/L25 subcomplex. Contacts the 5S rRNA and the P site tRNA. Forms a bridge to the 30S subunit in the 70S ribosome.

Its function is as follows. This is one of the proteins that bind and probably mediate the attachment of the 5S RNA into the large ribosomal subunit, where it forms part of the central protuberance. In the 70S ribosome it contacts protein S13 of the 30S subunit (bridge B1b), connecting the 2 subunits; this bridge is implicated in subunit movement. Contacts the P site tRNA; the 5S rRNA and some of its associated proteins might help stabilize positioning of ribosome-bound tRNAs. This Yersinia enterocolitica serotype O:8 / biotype 1B (strain NCTC 13174 / 8081) protein is Large ribosomal subunit protein uL5.